The following is an 87-amino-acid chain: Small ribosomal subunit protein bS20 (87 aa).

It belongs to the bacterial ribosomal protein bS20 family.

Its function is as follows. Binds directly to 16S ribosomal RNA. This is Small ribosomal subunit protein bS20 from Neorickettsia sennetsu (strain ATCC VR-367 / Miyayama) (Ehrlichia sennetsu).